A 187-amino-acid polypeptide reads, in one-letter code: Threonylcarbamoyl-AMP synthase (187 aa).

The 184-residue stretch at threonine 4 to aspartate 187 folds into the YrdC-like domain.

The protein belongs to the SUA5 family. TsaC subfamily.

The protein localises to the cytoplasm. The catalysed reaction is L-threonine + hydrogencarbonate + ATP = L-threonylcarbamoyladenylate + diphosphate + H2O. Required for the formation of a threonylcarbamoyl group on adenosine at position 37 (t(6)A37) in tRNAs that read codons beginning with adenine. Catalyzes the conversion of L-threonine, HCO(3)(-)/CO(2) and ATP to give threonylcarbamoyl-AMP (TC-AMP) as the acyladenylate intermediate, with the release of diphosphate. This Xanthomonas campestris pv. campestris (strain 8004) protein is Threonylcarbamoyl-AMP synthase.